Here is a 369-residue protein sequence, read N- to C-terminus: MSSRGGKKKSTKTSRSAKAGVIFPVGRMLRYIKKGHPKYRIGVGAPVYMAAVLEYLTAEILELAGNAARDNKKGRVTPRHILLAVANDEELNQLLKGVTIASGGVLPNIHPELLAKKRGSKGKLEAIITPPPAKKAKSPSQKKPVAKKTGGKKGARKSKKKQGEVSKAASADSTTEGTPTDGFTVLSTKSLFLGQKLQVVQADIASIDSDAVVHPTNTDFYTGGEVGNTLEKKGGKEFVEAVLELRKKNGPLEVAGAAISAGHGLPAKFVIHCNSPVWGADKCEELLEKTVKNCLALADDRKLKSIAFPSIGSGRNGFPKQTAAQLILKAISSYFVSTMSSSIKTVYFMLFDSESIGIYVQEMAKLDAN.

Residues 2-117 (SSRGGKKKST…NIHPELLAKK (116 aa)) form the Histone H2A domain. N6-lactoyllysine; alternate occurs at positions 7 and 9. The residue at position 18 (K18) is an N6-methyllysine. The residue at position 116 (K116) is an N6-acetyllysine; alternate. A Glycyl lysine isopeptide (Lys-Gly) (interchain with G-Cter in ubiquitin); alternate cross-link involves residue K116. K117 is covalently cross-linked (Glycyl lysine isopeptide (Lys-Gly) (interchain with G-Cter in ubiquitin)). At K123 the chain carries N6-acetyllysine; alternate. The residue at position 123 (K123) is an N6,N6-dimethyllysine; alternate. Residue K123 forms a Glycyl lysine isopeptide (Lys-Gly) (interchain with G-Cter in SUMO2); alternate linkage. The segment at 128-180 (ITPPPAKKAKSPSQKKPVAKKTGGKKGARKSKKKQGEVSKAASADSTTEGTPT) is disordered. T129 is subject to Phosphothreonine. A compositionally biased stretch (basic residues) spans 144–160 (PVAKKTGGKKGARKSKK). A Glycyl lysine isopeptide (Lys-Gly) (interchain with G-Cter in SUMO2) cross-link involves residue K167. 2 positions are modified to phosphoserine: S170 and S173. Residue T178 is modified to Phosphothreonine. The Macro domain maps to 184–367 (TVLSTKSLFL…IYVQEMAKLD (184 aa)). Residue K189 forms a Glycyl lysine isopeptide (Lys-Gly) (interchain with G-Cter in SUMO2) linkage. 8 residues coordinate a glycoprotein: D203, I204, V226, S275, G312, S313, G314, and N316. K320 participates in a covalent cross-link: Glycyl lysine isopeptide (Lys-Gly) (interchain with G-Cter in SUMO2).

This sequence belongs to the histone H2A family. As to quaternary structure, the nucleosome is a histone octamer containing two molecules each of H2A, H2B, H3 and H4 assembled in one H3-H4 heterotetramer and two H2A-H2B heterodimers. Interacts with HDAC1 and HDAC2. Interacts with SPOP. Part of a complex consisting of MACROH2A1, CUL3 and SPOP. Interacts with PARP1. Monoubiquitinated at either Lys-116 or Lys-117. May also be polyubiquitinated. Ubiquitination is mediated by the CUL3/SPOP E3 complex and does not promote proteasomal degradation. Instead, it is required for enrichment in inactive X chromosome chromatin. Widely expressed, with high levels in testis. Present in liver, kidney and adrenal gland (at protein level). In the liver, present in hepatocytes and at a lesser extent in cells of the bile ducts. In the kidney, expressed in proximal and distal convoluted tubules and in straight proximal tubules. In the adrenal gland, present in inner cells of the cortex and medulla.

Its subcellular location is the nucleus. It is found in the chromosome. Variant histone H2A which replaces conventional H2A in a subset of nucleosomes where it represses transcription. Nucleosomes wrap and compact DNA into chromatin, limiting DNA accessibility to the cellular machineries which require DNA as a template. Histones thereby play a central role in transcription regulation, DNA repair, DNA replication and chromosomal stability. DNA accessibility is regulated via a complex set of post-translational modifications of histones, also called histone code, and nucleosome remodeling. Involved in stable X chromosome inactivation. Inhibits the binding of transcription factors, including NF-kappa-B, and interferes with the activity of remodeling SWI/SNF complexes. Inhibits histone acetylation by EP300 and recruits class I HDACs, which induces a hypoacetylated state of chromatin. Functionally, isoform that specifically binds poly-ADP-ribose and O-acetyl-ADP-ribose and plays a key role in NAD(+) metabolism. Able to bind to the ends of poly-ADP-ribose chains created by PARP1 and cap them. This prevents PARP1 from further addition of ADP-ribose and thus limits the consumption of nuclear NAD(+), allowing the cell to maintain proper NAD(+) levels in both the nucleus and the mitochondria to promote proper mitochondrial respiration. Increases the expression of genes involved in redox metabolism, including SOD3. Its function is as follows. In contrast to isoform 1, does not bind poly-ADP-ribose. Represses SOD3 gene expression. In Mus musculus (Mouse), this protein is Core histone macro-H2A.1.